Here is a 185-residue protein sequence, read N- to C-terminus: Acireductone dioxygenase (185 aa).

Residues H96, H98, E102, and H140 each contribute to the Fe(2+) site. Ni(2+) is bound by residues H96, H98, E102, and H140.

It belongs to the acireductone dioxygenase (ARD) family. Monomer. Fe(2+) is required as a cofactor. Requires Ni(2+) as cofactor.

It carries out the reaction 1,2-dihydroxy-5-(methylsulfanyl)pent-1-en-3-one + O2 = 3-(methylsulfanyl)propanoate + CO + formate + 2 H(+). It catalyses the reaction 1,2-dihydroxy-5-(methylsulfanyl)pent-1-en-3-one + O2 = 4-methylsulfanyl-2-oxobutanoate + formate + 2 H(+). It functions in the pathway amino-acid biosynthesis; L-methionine biosynthesis via salvage pathway; L-methionine from S-methyl-5-thio-alpha-D-ribose 1-phosphate: step 5/6. Its function is as follows. Catalyzes 2 different reactions between oxygen and the acireductone 1,2-dihydroxy-3-keto-5-methylthiopentene (DHK-MTPene) depending upon the metal bound in the active site. Fe-containing acireductone dioxygenase (Fe-ARD) produces formate and 2-keto-4-methylthiobutyrate (KMTB), the alpha-ketoacid precursor of methionine in the methionine recycle pathway. Ni-containing acireductone dioxygenase (Ni-ARD) produces methylthiopropionate, carbon monoxide and formate, and does not lie on the methionine recycle pathway. In Marinobacter nauticus (strain ATCC 700491 / DSM 11845 / VT8) (Marinobacter aquaeolei), this protein is Acireductone dioxygenase.